The following is a 158-amino-acid chain: Protein E6 (158 aa).

2 zinc fingers span residues 32-68 (CVYCKTQLQQTEVYEFAFSDLFIVYRNGEPYAACQKC) and 105-141 (CMSCLKPLCPAEKLRHVNTKRRFHQIAGSYTGQCRHC). The PDZ-binding domain motif lies at 156–158 (TQV).

It belongs to the papillomaviridae E6 protein family. As to quaternary structure, forms homodimers. Interacts with ubiquitin-protein ligase UBE3A/E6-AP and thus forms a complex with human TP53. Interacts with human NFX1 and MAGI3. Interacts with human IRF3; this interaction inhibits the establishment of antiviral state. Interacts with human TYK2; this interaction inhibits JAK-STAT activation by interferon alpha. Interacts with host DLG1; this interaction leads to the proteasomal degradation of DLG1.

It localises to the host cytoplasm. It is found in the host nucleus. Plays a major role in the induction and maintenance of cellular transformation. Acts mainly as an oncoprotein by stimulating the destruction of many host cell key regulatory proteins. E6 associates with host UBE3A/E6-AP ubiquitin-protein ligase, and inactivates tumor suppressors TP53 and TP73 by targeting them to the 26S proteasome for degradation. In turn, DNA damage and chromosomal instabilities increase and lead to cell proliferation and cancer development. The complex E6/E6AP targets several other substrates to degradation via the proteasome including host DLG1 or NFX1, a repressor of human telomerase reverse transcriptase (hTERT). The resulting increased expression of hTERT prevents the shortening of telomere length leading to cell immortalization. Other cellular targets including BAK1, Fas-associated death domain-containing protein (FADD) and procaspase 8, are degraded by E6/E6AP causing inhibition of apoptosis. E6 also inhibits immune response by interacting with host IRF3 and TYK2. These interactions prevent IRF3 transcriptional activities and inhibit TYK2-mediated JAK-STAT activation by interferon alpha resulting in inhibition of the interferon signaling pathway. This Homo sapiens (Human) protein is Protein E6.